The sequence spans 523 residues: UPF0329 protein ECU02_0050 (523 aa).

The disordered stretch occupies residues 326 to 386 (EEKAKSKKRG…KTGKKSEGGR (61 aa)). Positions 330 to 339 (KSKKRGKRKS) are enriched in basic residues. Residues 344–353 (EAKEEEKKES) are compositionally biased toward basic and acidic residues. Positions 354–368 (ETEEVEAGEEVEMPS) are enriched in acidic residues.

The protein belongs to the UPF0329 family.

The chain is UPF0329 protein ECU02_0050 from Encephalitozoon cuniculi (strain GB-M1) (Microsporidian parasite).